The following is a 519-amino-acid chain: (3S,6E)-nerolidol synthase 1 (519 aa).

Residues Asp273, Asp277, Asp417, Ser421, and Glu425 each contribute to the Mg(2+) site. Residues 273-277 (DDIFD) carry the DDXXD motif motif.

It belongs to the terpene synthase family. Tpsg subfamily. Mg(2+) serves as cofactor. Requires Mn(2+) as cofactor. As to expression, expressed in receptacle tissue. Not detected in leaves or green fruit.

Its subcellular location is the cytoplasm. It localises to the cytosol. The catalysed reaction is (2E,6E)-farnesyl diphosphate + H2O = (3S,6E)-nerolidol + diphosphate. The protein operates within secondary metabolite biosynthesis; terpenoid biosynthesis. Its function is as follows. Involved in monoterpene (C10) and sesquiterpene (C15) biosynthesis. Converts geranyl diphosphate (GPP) into S-linalool and farnesyl diphosphate (FPP) into (3S)-E-nerolidol. Exclusively present and highly expressed in the fruit of cultivated (octaploid) varieties. This is (3S,6E)-nerolidol synthase 1 from Fragaria ananassa (Strawberry).